Here is a 473-residue protein sequence, read N- to C-terminus: 3-isopropylmalate dehydratase large subunit (473 aa).

Cys354, Cys414, and Cys417 together coordinate [4Fe-4S] cluster.

The protein belongs to the aconitase/IPM isomerase family. LeuC type 1 subfamily. In terms of assembly, heterodimer of LeuC and LeuD. Requires [4Fe-4S] cluster as cofactor.

It carries out the reaction (2R,3S)-3-isopropylmalate = (2S)-2-isopropylmalate. It participates in amino-acid biosynthesis; L-leucine biosynthesis; L-leucine from 3-methyl-2-oxobutanoate: step 2/4. Its function is as follows. Catalyzes the isomerization between 2-isopropylmalate and 3-isopropylmalate, via the formation of 2-isopropylmaleate. The polypeptide is 3-isopropylmalate dehydratase large subunit (Mycobacterium tuberculosis (strain CDC 1551 / Oshkosh)).